We begin with the raw amino-acid sequence, 287 residues long: Neugrin (287 aa).

The N-terminal stretch at 1 to 23 is a signal peptide; the sequence is MAFSPNVLLGGRVCAAVARSGFA. The tract at residues 149-169 is disordered; sequence SIPELPGPGDSSKPLSAGQSV. N202 carries an N-linked (GlcNAc...) asparagine glycan.

The protein belongs to the neugrin family. In terms of assembly, forms a regulatory protein-RNA complex, consisting of RCC1L, NGRN, RPUSD3, RPUSD4, TRUB2, FASTKD2 and 16S mt-rRNA. Interacts with 16S mt-rRNA; this interaction is direct.

Its subcellular location is the nucleus. The protein localises to the secreted. It is found in the mitochondrion membrane. In terms of biological role, plays an essential role in mitochondrial ribosome biogenesis. As a component of a functional protein-RNA module, consisting of RCC1L, NGRN, RPUSD3, RPUSD4, TRUB2, FASTKD2 and 16S mitochondrial ribosomal RNA (16S mt-rRNA), controls 16S mt-rRNA abundance and is required for intra-mitochondrial translation of core subunits of the oxidative phosphorylation system. This chain is Neugrin (NGRN), found in Bos taurus (Bovine).